Consider the following 554-residue polypeptide: Hydroxylamine reductase (554 aa).

[2Fe-2S] cluster contacts are provided by Cys-3, Cys-6, Cys-18, and Cys-25. The hybrid [4Fe-2O-2S] cluster site is built by His-252, Glu-276, Cys-320, Cys-408, Cys-436, Cys-461, Glu-495, and Lys-497. At Cys-408 the chain carries Cysteine persulfide.

It belongs to the HCP family. It depends on [2Fe-2S] cluster as a cofactor. The cofactor is hybrid [4Fe-2O-2S] cluster.

It is found in the cytoplasm. The enzyme catalyses A + NH4(+) + H2O = hydroxylamine + AH2 + H(+). Functionally, catalyzes the reduction of hydroxylamine to form NH(3) and H(2)O. This Shewanella pealeana (strain ATCC 700345 / ANG-SQ1) protein is Hydroxylamine reductase.